The chain runs to 396 residues: S-adenosylmethionine synthase (396 aa).

ATP is bound at residue H16. D18 serves as a coordination point for Mg(2+). E44 contributes to the K(+) binding site. L-methionine is bound by residues E57 and Q100. A flexible loop region spans residues 100 to 110; that stretch reads QSPDINQGVDR. Residues 165–167, D240, 246–247, A263, and K267 contribute to the ATP site; these read DAK and RK. An L-methionine-binding site is contributed by D240. An L-methionine-binding site is contributed by K271.

The protein belongs to the AdoMet synthase family. In terms of assembly, homotetramer; dimer of dimers. Requires Mg(2+) as cofactor. K(+) serves as cofactor.

Its subcellular location is the cytoplasm. It catalyses the reaction L-methionine + ATP + H2O = S-adenosyl-L-methionine + phosphate + diphosphate. Its pathway is amino-acid biosynthesis; S-adenosyl-L-methionine biosynthesis; S-adenosyl-L-methionine from L-methionine: step 1/1. Functionally, catalyzes the formation of S-adenosylmethionine (AdoMet) from methionine and ATP. The overall synthetic reaction is composed of two sequential steps, AdoMet formation and the subsequent tripolyphosphate hydrolysis which occurs prior to release of AdoMet from the enzyme. The sequence is that of S-adenosylmethionine synthase from Pseudomonas fluorescens (strain SBW25).